The primary structure comprises 47 residues: Lysis protein for colicin E8 (47 aa).

The N-terminal stretch at 1-19 (MKKITGIILLLLAVIILAA) is a signal peptide. The N-palmitoyl cysteine moiety is linked to residue Cys20. Cys20 carries the S-diacylglycerol cysteine lipid modification.

Its subcellular location is the cell outer membrane. In terms of biological role, lysis proteins are required for both colicin release and partial cell lysis. In Escherichia coli, this protein is Lysis protein for colicin E8 (lys).